The chain runs to 120 residues: Jacalin-related lectin 39 (120 aa).

One can recognise a Jacalin-type lectin domain in the interval 6–120; the sequence is SRDHADFVAH…KRTFDFGGFN (115 aa).

This sequence belongs to the jacalin lectin family.

In Arabidopsis thaliana (Mouse-ear cress), this protein is Jacalin-related lectin 39 (JAL39).